The chain runs to 146 residues: D-aminoacyl-tRNA deacylase (146 aa).

The short motif at 138–139 (GP) is the Gly-cisPro motif, important for rejection of L-amino acids element.

Belongs to the DTD family. As to quaternary structure, homodimer.

The protein localises to the cytoplasm. It carries out the reaction glycyl-tRNA(Ala) + H2O = tRNA(Ala) + glycine + H(+). It catalyses the reaction a D-aminoacyl-tRNA + H2O = a tRNA + a D-alpha-amino acid + H(+). Its function is as follows. An aminoacyl-tRNA editing enzyme that deacylates mischarged D-aminoacyl-tRNAs. Also deacylates mischarged glycyl-tRNA(Ala), protecting cells against glycine mischarging by AlaRS. Acts via tRNA-based rather than protein-based catalysis; rejects L-amino acids rather than detecting D-amino acids in the active site. By recycling D-aminoacyl-tRNA to D-amino acids and free tRNA molecules, this enzyme counteracts the toxicity associated with the formation of D-aminoacyl-tRNA entities in vivo and helps enforce protein L-homochirality. This is D-aminoacyl-tRNA deacylase from Xanthomonas euvesicatoria pv. vesicatoria (strain 85-10) (Xanthomonas campestris pv. vesicatoria).